Consider the following 445-residue polypeptide: Tubulin beta-2 chain (445 aa).

GTP contacts are provided by Gln-11, Glu-69, Ser-138, Gly-142, Thr-143, Gly-144, Asn-204, and Asn-226. A Mg(2+)-binding site is contributed by Glu-69. Residues 424 to 445 (QYQDATAEDEGEFDEDEEVEEA) form a disordered region. A compositionally biased stretch (acidic residues) spans 429–445 (TAEDEGEFDEDEEVEEA).

This sequence belongs to the tubulin family. In terms of assembly, dimer of alpha and beta chains. A typical microtubule is a hollow water-filled tube with an outer diameter of 25 nm and an inner diameter of 15 nM. Alpha-beta heterodimers associate head-to-tail to form protofilaments running lengthwise along the microtubule wall with the beta-tubulin subunit facing the microtubule plus end conferring a structural polarity. Microtubules usually have 13 protofilaments but different protofilament numbers can be found in some organisms and specialized cells. Requires Mg(2+) as cofactor.

It is found in the cytoplasm. It localises to the cytoskeleton. In terms of biological role, tubulin is the major constituent of microtubules, a cylinder consisting of laterally associated linear protofilaments composed of alpha- and beta-tubulin heterodimers. Microtubules grow by the addition of GTP-tubulin dimers to the microtubule end, where a stabilizing cap forms. Below the cap, tubulin dimers are in GDP-bound state, owing to GTPase activity of alpha-tubulin. This is Tubulin beta-2 chain (TUB-2) from Echinococcus multilocularis (Fox tapeworm).